Consider the following 63-residue polypeptide: Conotoxin Cl14.11 (63 aa).

The N-terminal stretch at 1-21 (MRFLLLLTVALLLTCIMETDA) is a signal peptide. Positions 22-34 (EAKPEDLAERFRE) are excised as a propeptide.

Post-translationally, contains 2 disulfide bond. As to expression, expressed by the venom duct.

It localises to the secreted. This Californiconus californicus (California cone) protein is Conotoxin Cl14.11.